A 130-amino-acid polypeptide reads, in one-letter code: Large ribosomal subunit protein bL20 (130 aa).

The protein belongs to the bacterial ribosomal protein bL20 family.

In terms of biological role, binds directly to 23S ribosomal RNA and is necessary for the in vitro assembly process of the 50S ribosomal subunit. It is not involved in the protein synthesizing functions of that subunit. This is Large ribosomal subunit protein bL20 from Solibacter usitatus (strain Ellin6076).